An 86-amino-acid chain; its full sequence is Cell division topological specificity factor (86 aa).

The protein belongs to the MinE family.

Functionally, prevents the cell division inhibition by proteins MinC and MinD at internal division sites while permitting inhibition at polar sites. This ensures cell division at the proper site by restricting the formation of a division septum at the midpoint of the long axis of the cell. This Photobacterium profundum (strain SS9) protein is Cell division topological specificity factor.